A 797-amino-acid chain; its full sequence is Ribosome biogenesis protein BOP1 homolog (797 aa).

2 disordered regions span residues leucine 22 to proline 112 and serine 149 to valine 177. Low complexity predominate over residues alanine 61–alanine 73. The segment covering proline 74 to alanine 87 has biased composition (acidic residues). The segment covering glycine 90 to proline 112 has biased composition (gly residues). WD repeat units follow at residues glycine 462–threonine 502, valine 504–glutamate 544, arginine 581–proline 623, lysine 626–lysine 664, glycine 667–lysine 706, tyrosine 710–threonine 749, and threonine 766–asparagine 797.

This sequence belongs to the WD repeat BOP1/ERB1 family.

It is found in the nucleus. The protein resides in the nucleolus. It localises to the nucleoplasm. Its function is as follows. Required for maturation of ribosomal RNAs and formation of the large ribosomal subunit. The sequence is that of Ribosome biogenesis protein BOP1 homolog from Chlamydomonas reinhardtii (Chlamydomonas smithii).